An 885-amino-acid polypeptide reads, in one-letter code: MPLHGKDPFELNKTRVKSGEEYFVIKFTKEHFKRYKDYIDRYELYRQKIWTCSITGKQNLTFEEALLSEKNASEKVSKVSELLLPHCLEFIQYKEITLEEMTNQLYEFLLMNYYPGEIVSFKKANVKYTGRIIELLENYNESDEQSDNEQQKKSSSSSSTTTTTTTPTTPPTTTTTTSSSINALSAIPIPKKEIKLQLYSDDENEEEDEKNNGDTSSDKKGEKEKEKEKEKEKEKEKEKEKEKEKEKEKEKEKEKDSDTKSVRKYVDPRKKLDSIKKYYKIYVDSQGKNFIINIKDIQKREPPIFKPMVKDTIKTVAKKTKHLGGFWEVEPELIKKYNLEGLKIPSSVRKEVEQHLKRKRIADGEILEDTEEESVDIESNDNSNSNGNSNSNNNLDSSDESETERKRKRPKYPIEDQDVDRENEETGKENERPIASSDFFCLSNTFGDFLMVWHFLNHFEKVLLLSPFPLDDFEMAIQHHTETNILVESHIRLMKTIFTLPSYSSGTPKKTFGGKAITDRNWLATLRAYFQNEVKRIAIEEKEKQEKLKQLEEQNIRMLNLANELPGSDDEDDEMKLDEDGNEIKKDVEMKDNDGTKDTKKDDEENEEEEEEEEEEEEEVASDEGEEEWKEENEIITSADANTICKVLKKKNYFKLSVEERIYILAYLVKQTIASEKIRKHLEKNVELGNEVKQEKKGIILEEKQLKQDDAAAAAEDDDENNEDDEEQQQQEVKKPKGAKQKKPITPVVEKEIEKLEKKLEILDEKLEKYSTRLESLGRDRNYRNYWYWYQLPSKIYVENENGGWEYYSSKKELDDLIKYLDNRGIRERKLLFNIKPKYDFIVSQLEKKNKEIIEQIQFESKRSQRIKQLYTEKSYISWENKYDY.

Residues 20–125 (EEYFVIKFTK…GEIVSFKKAN (106 aa)) form the WAC domain. Disordered regions lie at residues 141-184 (ESDE…INAL), 201-264 (DDEN…SVRK), and 367-431 (LEDT…KENE). A compositionally biased stretch (low complexity) spans 154–180 (SSSSSSTTTTTTTPTTPPTTTTTTSSS). Residues 210 to 264 (KNNGDTSSDKKGEKEKEKEKEKEKEKEKEKEKEKEKEKEKEKEKEKDSDTKSVRK) show a composition bias toward basic and acidic residues. Positions 217–260 (SDKKGEKEKEKEKEKEKEKEKEKEKEKEKEKEKEKEKEKDSDTK) form a coiled coil. A compositionally biased stretch (acidic residues) spans 367-379 (LEDTEEESVDIES). The segment covering 380 to 396 (NDNSNSNGNSNSNNNLD) has biased composition (low complexity). A DDT domain is found at 443-503 (SNTFGDFLMV…MKTIFTLPSY (61 aa)). The stretch at 530-565 (FQNEVKRIAIEEKEKQEKLKQLEEQNIRMLNLANEL) forms a coiled coil. Disordered stretches follow at residues 562 to 632 (ANEL…WKEE) and 707 to 744 (KQDD…QKKP). Residues 567–577 (GSDDEDDEMKL) show a composition bias toward acidic residues. Residues 578–603 (DEDGNEIKKDVEMKDNDGTKDTKKDD) show a composition bias toward basic and acidic residues. 2 coiled-coil regions span residues 593–628 (NDGT…GEEE) and 674–782 (ASEK…RDRN). 2 stretches are compositionally biased toward acidic residues: residues 604–631 (EENE…EWKE) and 715–729 (AEDD…EEQQ).

Its subcellular location is the nucleus. This is DDT domain-containing protein DDB_G0282237 from Dictyostelium discoideum (Social amoeba).